A 193-amino-acid chain; its full sequence is MFSEELKAFRRLGIRHLLLQALNFASVIASGLMMWKGLGVITNTESPIVVVLSGSMEPAFYRGDLLFLTNPSGVRFHTGDITVYKVPNGDIPIVHRVLETHEIAPNATFVPHKYNRAYTPEDQLLLTKGDNNPIDDTGLYTQGMDWLERKHIVGKVRGFVPYVGYATIAMNDFPQLKYGLLGILGLMALIQRE.

Over 1–16 the chain is Cytoplasmic; the sequence is MFSEELKAFRRLGIRH. The chain crosses the membrane as a helical; Signal-anchor for type II membrane protein span at residues 17–41; the sequence is LLLQALNFASVIASGLMMWKGLGVI. The Lumenal portion of the chain corresponds to 42-193; it reads TNTESPIVVV…LGLMALIQRE (152 aa). Active-site charge relay system residues include serine 55 and histidine 95. Residue asparagine 106 is glycosylated (N-linked (GlcNAc...) asparagine). Aspartate 136 functions as the Charge relay system in the catalytic mechanism. The interval 179 to 190 is C-terminal short (CTS) helix; sequence GLLGILGLMALI.

It belongs to the peptidase S26B family. As to quaternary structure, component of the signal peptidase complex (SPC) composed of a catalytic subunit SEC11 and three accessory subunits SPC1, SPC2 and SPC3. The complex induces a local thinning of the ER membrane which is used to measure the length of the signal peptide (SP) h-region of protein substrates. This ensures the selectivity of the complex towards h-regions shorter than 18-20 amino acids. SPC associates with the translocon complex.

Its subcellular location is the endoplasmic reticulum membrane. The enzyme catalyses Cleavage of hydrophobic, N-terminal signal or leader sequences from secreted and periplasmic proteins.. Functionally, catalytic component of the signal peptidase complex (SPC) which catalyzes the cleavage of N-terminal signal sequences from nascent proteins as they are translocated into the lumen of the endoplasmic reticulum. Specifically cleaves N-terminal signal peptides that contain a hydrophobic alpha-helix (h-region) shorter than 18-20 amino acids. This is Signal peptidase complex catalytic subunit SEC11 (SEC11) from Schizophyllum commune (strain H4-8 / FGSC 9210) (Split gill fungus).